The sequence spans 109 residues: Small ribosomal subunit protein uS10 (109 aa).

It belongs to the universal ribosomal protein uS10 family. Part of the 30S ribosomal subunit.

Its function is as follows. Involved in the binding of tRNA to the ribosomes. The protein is Small ribosomal subunit protein uS10 of Wolbachia pipientis wMel.